A 205-amino-acid chain; its full sequence is Ribonuclease HII (205 aa).

An RNase H type-2 domain is found at 16–205 (VSEVGIDEVG…KSFLNQSDLI (190 aa)). 3 residues coordinate a divalent metal cation: aspartate 22, glutamate 23, and aspartate 118.

The protein belongs to the RNase HII family. Requires Mn(2+) as cofactor. Mg(2+) is required as a cofactor.

The protein localises to the cytoplasm. It carries out the reaction Endonucleolytic cleavage to 5'-phosphomonoester.. In terms of biological role, endonuclease that specifically degrades the RNA of RNA-DNA hybrids. The chain is Ribonuclease HII from Prochlorococcus marinus (strain MIT 9312).